The primary structure comprises 394 residues: Elongation factor Tu, mitochondrial (394 aa).

The 195-residue stretch at 10 to 204 (KPHCNIGTIG…AVDNYIPQPE (195 aa)) folds into the tr-type G domain. Residues 19–26 (GHVDHGKT) are G1. 19 to 26 (GHVDHGKT) lines the GTP pocket. Positions 60–64 (GITIS) are G2. Positions 81–84 (DCPG) are G3. GTP is bound by residues 81–85 (DCPGH) and 136–139 (NKVD). The tract at residues 136-139 (NKVD) is G4. The tract at residues 174–176 (SAL) is G5.

The protein belongs to the TRAFAC class translation factor GTPase superfamily. Classic translation factor GTPase family. EF-Tu/EF-1A subfamily.

The protein resides in the mitochondrion. Its function is as follows. This protein promotes the GTP-dependent binding of aminoacyl-tRNA to the A-site of ribosomes during protein biosynthesis. In Reclinomonas americana, this protein is Elongation factor Tu, mitochondrial (TUFA).